The sequence spans 430 residues: Enolase (430 aa).

A (2R)-2-phosphoglycerate-binding site is contributed by glutamine 163. Glutamate 205 acts as the Proton donor in catalysis. Mg(2+) contacts are provided by aspartate 242, glutamate 287, and aspartate 314. Positions 339, 368, 369, and 390 each coordinate (2R)-2-phosphoglycerate. Lysine 339 serves as the catalytic Proton acceptor.

The protein belongs to the enolase family. It depends on Mg(2+) as a cofactor.

Its subcellular location is the cytoplasm. The protein localises to the secreted. It is found in the cell surface. The enzyme catalyses (2R)-2-phosphoglycerate = phosphoenolpyruvate + H2O. It functions in the pathway carbohydrate degradation; glycolysis; pyruvate from D-glyceraldehyde 3-phosphate: step 4/5. Catalyzes the reversible conversion of 2-phosphoglycerate (2-PG) into phosphoenolpyruvate (PEP). It is essential for the degradation of carbohydrates via glycolysis. This is Enolase from Exiguobacterium sp. (strain ATCC BAA-1283 / AT1b).